The chain runs to 244 residues: Biosynthetic peptidoglycan transglycosylase (244 aa).

Residues 25-45 traverse the membrane as a helical segment; that stretch reads LLLLLAIALLYQSWFLLHIIY.

It belongs to the glycosyltransferase 51 family.

Its subcellular location is the cell inner membrane. The enzyme catalyses [GlcNAc-(1-&gt;4)-Mur2Ac(oyl-L-Ala-gamma-D-Glu-L-Lys-D-Ala-D-Ala)](n)-di-trans,octa-cis-undecaprenyl diphosphate + beta-D-GlcNAc-(1-&gt;4)-Mur2Ac(oyl-L-Ala-gamma-D-Glu-L-Lys-D-Ala-D-Ala)-di-trans,octa-cis-undecaprenyl diphosphate = [GlcNAc-(1-&gt;4)-Mur2Ac(oyl-L-Ala-gamma-D-Glu-L-Lys-D-Ala-D-Ala)](n+1)-di-trans,octa-cis-undecaprenyl diphosphate + di-trans,octa-cis-undecaprenyl diphosphate + H(+). It functions in the pathway cell wall biogenesis; peptidoglycan biosynthesis. Its function is as follows. Peptidoglycan polymerase that catalyzes glycan chain elongation from lipid-linked precursors. This is Biosynthetic peptidoglycan transglycosylase from Nitrosomonas eutropha (strain DSM 101675 / C91 / Nm57).